The primary structure comprises 602 residues: Elongation factor 4 (602 aa).

Residues 7–189 (KHIRNFSIVA…AIVDKIPSPQ (183 aa)) form the tr-type G domain. Residues 19 to 24 (DHGKST) and 136 to 139 (NKID) contribute to the GTP site.

It belongs to the TRAFAC class translation factor GTPase superfamily. Classic translation factor GTPase family. LepA subfamily.

It is found in the cell membrane. The enzyme catalyses GTP + H2O = GDP + phosphate + H(+). Required for accurate and efficient protein synthesis under certain stress conditions. May act as a fidelity factor of the translation reaction, by catalyzing a one-codon backward translocation of tRNAs on improperly translocated ribosomes. Back-translocation proceeds from a post-translocation (POST) complex to a pre-translocation (PRE) complex, thus giving elongation factor G a second chance to translocate the tRNAs correctly. Binds to ribosomes in a GTP-dependent manner. The polypeptide is Elongation factor 4 (Clostridium kluyveri (strain ATCC 8527 / DSM 555 / NBRC 12016 / NCIMB 10680 / K1)).